A 621-amino-acid polypeptide reads, in one-letter code: Chaperone protein HscA homolog (621 aa).

This sequence belongs to the heat shock protein 70 family.

Functionally, chaperone involved in the maturation of iron-sulfur cluster-containing proteins. Has a low intrinsic ATPase activity which is markedly stimulated by HscB. The sequence is that of Chaperone protein HscA homolog from Cupriavidus metallidurans (strain ATCC 43123 / DSM 2839 / NBRC 102507 / CH34) (Ralstonia metallidurans).